Here is a 131-residue protein sequence, read N- to C-terminus: D-ribose pyranase (131 aa).

His20 serves as the catalytic Proton donor. Substrate-binding positions include Asp28, His98, and 120 to 122 (YAN).

It belongs to the RbsD / FucU family. RbsD subfamily. Homodecamer.

The protein resides in the cytoplasm. The catalysed reaction is beta-D-ribopyranose = beta-D-ribofuranose. Its pathway is carbohydrate metabolism; D-ribose degradation; D-ribose 5-phosphate from beta-D-ribopyranose: step 1/2. Catalyzes the interconversion of beta-pyran and beta-furan forms of D-ribose. This Enterococcus faecalis (strain ATCC 700802 / V583) protein is D-ribose pyranase.